The chain runs to 365 residues: Histidinol-phosphate aminotransferase (365 aa).

Lys223 carries the post-translational modification N6-(pyridoxal phosphate)lysine.

Belongs to the class-II pyridoxal-phosphate-dependent aminotransferase family. Histidinol-phosphate aminotransferase subfamily. Homodimer. Requires pyridoxal 5'-phosphate as cofactor.

It catalyses the reaction L-histidinol phosphate + 2-oxoglutarate = 3-(imidazol-4-yl)-2-oxopropyl phosphate + L-glutamate. It functions in the pathway amino-acid biosynthesis; L-histidine biosynthesis; L-histidine from 5-phospho-alpha-D-ribose 1-diphosphate: step 7/9. In Brucella melitensis biotype 1 (strain ATCC 23456 / CCUG 17765 / NCTC 10094 / 16M), this protein is Histidinol-phosphate aminotransferase.